We begin with the raw amino-acid sequence, 290 residues long: Acetyl-coenzyme A carboxylase carboxyl transferase subunit beta (290 aa).

Residues leucine 27 to alanine 290 form the CoA carboxyltransferase N-terminal domain. Zn(2+) is bound by residues cysteine 31, cysteine 34, cysteine 50, and cysteine 53. The segment at cysteine 31 to cysteine 53 adopts a C4-type zinc-finger fold.

This sequence belongs to the AccD/PCCB family. In terms of assembly, acetyl-CoA carboxylase is a heterohexamer composed of biotin carboxyl carrier protein (AccB), biotin carboxylase (AccC) and two subunits each of ACCase subunit alpha (AccA) and ACCase subunit beta (AccD). Zn(2+) is required as a cofactor.

It localises to the cytoplasm. The catalysed reaction is N(6)-carboxybiotinyl-L-lysyl-[protein] + acetyl-CoA = N(6)-biotinyl-L-lysyl-[protein] + malonyl-CoA. It participates in lipid metabolism; malonyl-CoA biosynthesis; malonyl-CoA from acetyl-CoA: step 1/1. In terms of biological role, component of the acetyl coenzyme A carboxylase (ACC) complex. Biotin carboxylase (BC) catalyzes the carboxylation of biotin on its carrier protein (BCCP) and then the CO(2) group is transferred by the transcarboxylase to acetyl-CoA to form malonyl-CoA. The sequence is that of Acetyl-coenzyme A carboxylase carboxyl transferase subunit beta from Burkholderia cenocepacia (strain ATCC BAA-245 / DSM 16553 / LMG 16656 / NCTC 13227 / J2315 / CF5610) (Burkholderia cepacia (strain J2315)).